The chain runs to 61 residues: Photosystem II reaction center protein K (61 aa).

Residues 1–24 (MLNIFSLICICLNSVLYSSSFFVA) constitute a propeptide that is removed on maturation. Residues 40–60 (MPVIPVLFFLLAFVWQAAVSF) traverse the membrane as a helical segment.

Belongs to the PsbK family. In terms of assembly, PSII is composed of 1 copy each of membrane proteins PsbA, PsbB, PsbC, PsbD, PsbE, PsbF, PsbH, PsbI, PsbJ, PsbK, PsbL, PsbM, PsbT, PsbX, PsbY, PsbZ, Psb30/Ycf12, at least 3 peripheral proteins of the oxygen-evolving complex and a large number of cofactors. It forms dimeric complexes.

It is found in the plastid. The protein localises to the chloroplast thylakoid membrane. Its function is as follows. One of the components of the core complex of photosystem II (PSII). PSII is a light-driven water:plastoquinone oxidoreductase that uses light energy to abstract electrons from H(2)O, generating O(2) and a proton gradient subsequently used for ATP formation. It consists of a core antenna complex that captures photons, and an electron transfer chain that converts photonic excitation into a charge separation. This chain is Photosystem II reaction center protein K, found in Morus indica (Mulberry).